Reading from the N-terminus, the 453-residue chain is UDP-N-acetylmuramate--L-alanine ligase (453 aa).

112 to 118 (GTHGKTT) serves as a coordination point for ATP.

It belongs to the MurCDEF family.

Its subcellular location is the cytoplasm. It carries out the reaction UDP-N-acetyl-alpha-D-muramate + L-alanine + ATP = UDP-N-acetyl-alpha-D-muramoyl-L-alanine + ADP + phosphate + H(+). It participates in cell wall biogenesis; peptidoglycan biosynthesis. In terms of biological role, cell wall formation. The polypeptide is UDP-N-acetylmuramate--L-alanine ligase (Bdellovibrio bacteriovorus (strain ATCC 15356 / DSM 50701 / NCIMB 9529 / HD100)).